A 257-amino-acid chain; its full sequence is Acetylglutamate kinase (257 aa).

Residues 43–44 (GG), Arg-65, and Asn-157 each bind substrate. ATP contacts are provided by residues 180 to 185 (DISSIL) and 208 to 210 (IIT).

This sequence belongs to the acetylglutamate kinase family. ArgB subfamily. Homodimer.

The protein localises to the cytoplasm. The enzyme catalyses N-acetyl-L-glutamate + ATP = N-acetyl-L-glutamyl 5-phosphate + ADP. The protein operates within amino-acid biosynthesis; L-arginine biosynthesis; N(2)-acetyl-L-ornithine from L-glutamate: step 2/4. Its function is as follows. Catalyzes the ATP-dependent phosphorylation of N-acetyl-L-glutamate. In Buchnera aphidicola subsp. Acyrthosiphon pisum (strain Tuc7), this protein is Acetylglutamate kinase.